The primary structure comprises 309 residues: Porphobilinogen deaminase (309 aa).

At Cys241 the chain carries S-(dipyrrolylmethanemethyl)cysteine.

The protein belongs to the HMBS family. Monomer. Dipyrromethane serves as cofactor.

It catalyses the reaction 4 porphobilinogen + H2O = hydroxymethylbilane + 4 NH4(+). It functions in the pathway porphyrin-containing compound metabolism; protoporphyrin-IX biosynthesis; coproporphyrinogen-III from 5-aminolevulinate: step 2/4. Its function is as follows. Tetrapolymerization of the monopyrrole PBG into the hydroxymethylbilane pre-uroporphyrinogen in several discrete steps. The polypeptide is Porphobilinogen deaminase (Desulforudis audaxviator (strain MP104C)).